Consider the following 601-residue polypeptide: CDPK-related kinase 5 (601 aa).

The span at 1–19 (MGLCTSKPNSSNSDQTPAR) shows a compositional bias: polar residues. Disordered regions lie at residues 1 to 55 (MGLC…KSPF) and 70 to 98 (KKTPARSPATNSTNSTPKRFFKRPFPPPS). Glycine 2 carries N-myristoyl glycine lipidation. The segment covering 26 to 35 (SESVKPSSSS) has biased composition (low complexity). Over residues 36-48 (VNGEDQCVTTTNN) the composition is skewed to polar residues. Residues 148-410 (YELGDEVGRG…AAQALSHPWI (263 aa)) form the Protein kinase domain. Residues 154–162 (VGRGHFGYT) and lysine 180 contribute to the ATP site. The active-site Proton acceptor is aspartate 276. At serine 316 the chain carries Phosphoserine. The interval 415–445 (DAKVPMDILVFKLMRAYLRSSSLRKAALRAL) is autoinhibitory domain. The calmodulin binding (CaMBD) stretch occupies residues 434–454 (SSSLRKAALRALSKTLTVDEL). EF-hand domains are found at residues 452–488 (DELFYLREQFALLEPSKNGTISLENIKSALMKMATDA), 489–524 (MKDSRIPEFLGQLSALQYRRMDFEEFCAAALSVHQL), 525–564 (EALDRWEQHARCAYELFEKEGNRPIMIDELASELGLGPSV), and 567–596 (HAVLHDWLRHTDGKLSFLGFVKLLHGVSSR). Residues serine 467, asparagine 469, threonine 471, asparagine 476, arginine 508, glutamate 513, asparagine 546, glutamate 553, aspartate 578, and lysine 580 each coordinate Ca(2+). Position 582 is a phosphoserine (serine 582).

It belongs to the protein kinase superfamily. Ser/Thr protein kinase family. CDPK subfamily. Binds calmodulin (CaM) in a calcium-dependent manner.

The protein resides in the membrane. The enzyme catalyses L-seryl-[protein] + ATP = O-phospho-L-seryl-[protein] + ADP + H(+). The catalysed reaction is L-threonyl-[protein] + ATP = O-phospho-L-threonyl-[protein] + ADP + H(+). With respect to regulation, activated by calcium and calmodulin. Autophosphorylation may play an important role in the regulation of the kinase activity. Functionally, may play a role in signal transduction pathways that involve calcium as a second messenger. The polypeptide is CDPK-related kinase 5 (CRK5) (Arabidopsis thaliana (Mouse-ear cress)).